The sequence spans 358 residues: Phospho-N-acetylmuramoyl-pentapeptide-transferase (358 aa).

A run of 10 helical transmembrane segments spans residues 3–23 (QILF…PALI), 54–74 (GVAI…IGIA), 84–104 (ALLV…DDFI), 114–134 (LTAA…GVLA), 156–176 (ITTV…VVVA), 187–207 (LDGL…IITF), 231–251 (LALV…WNAA), 255–275 (IFMG…LSIT), 283–303 (VVIG…VAVF), and 330–350 (VIIR…GLFY).

It belongs to the glycosyltransferase 4 family. MraY subfamily. It depends on Mg(2+) as a cofactor.

It is found in the cell membrane. The catalysed reaction is UDP-N-acetyl-alpha-D-muramoyl-L-alanyl-gamma-D-glutamyl-meso-2,6-diaminopimeloyl-D-alanyl-D-alanine + di-trans,octa-cis-undecaprenyl phosphate = di-trans,octa-cis-undecaprenyl diphospho-N-acetyl-alpha-D-muramoyl-L-alanyl-D-glutamyl-meso-2,6-diaminopimeloyl-D-alanyl-D-alanine + UMP. The protein operates within cell wall biogenesis; peptidoglycan biosynthesis. Its function is as follows. Catalyzes the initial step of the lipid cycle reactions in the biosynthesis of the cell wall peptidoglycan: transfers peptidoglycan precursor phospho-MurNAc-pentapeptide from UDP-MurNAc-pentapeptide onto the lipid carrier undecaprenyl phosphate, yielding undecaprenyl-pyrophosphoryl-MurNAc-pentapeptide, known as lipid I. The polypeptide is Phospho-N-acetylmuramoyl-pentapeptide-transferase (Nocardia farcinica (strain IFM 10152)).